Reading from the N-terminus, the 549-residue chain is FMRFamide receptor (549 aa).

The Extracellular portion of the chain corresponds to 1–117 (MSGTAVARLL…NNRIEFWVCG (117 aa)). N59, N70, and N93 each carry an N-linked (GlcNAc...) asparagine glycan. The helical transmembrane segment at 118 to 138 (VLINIVGVLGILGNIISMIIL) threads the bilayer. The Cytoplasmic segment spans residues 139–158 (SRPQMRSSINYLLTGLARCD). Residues 159-179 (TVLIITSILLFGIPSIYPYTG) traverse the membrane as a helical segment. At 180-181 (HF) the chain is on the extracellular side. The chain crosses the membrane as a helical span at residues 182 to 202 (FGYYNYVYPFISPAVFPIGMI). Residues 203–238 (AQTASIYMTFTVTLERYVAVCHPLKARALCTYGRAK) lie on the Cytoplasmic side of the membrane. A helical transmembrane segment spans residues 239-259 (IYFIVCVCFSLAYNMPRFWEV). Residues 260–289 (LTVTYPEPGKDVILHCVRPSRLRRSETYIN) are Extracellular-facing. Residues 290–310 (IYIHWCYLIVNYIIPFLTLAI) traverse the membrane as a helical segment. Residues 311-341 (LNCLIYRQVKRANRERQRLSRSEKREIGLAT) are Cytoplasmic-facing. The helical transmembrane segment at 342–362 (MLLCVVIVFFMLNFLPLVLNI) threads the bilayer. Over 363–376 (SEAFYSTIDHKITK) the chain is Extracellular. A helical transmembrane segment spans residues 377–397 (ISNLLITINSSVNFLIYIIFG). The Cytoplasmic portion of the chain corresponds to 398 to 549 (EKFKRIFLLI…KKLGHVSSGF (152 aa)).

This sequence belongs to the G-protein coupled receptor 1 family. In terms of tissue distribution, expressed in ovaries, heads and bodies. Expressed in dopaminergic neurons.

It is found in the cell membrane. In terms of biological role, a receptor for the FMRFamide peptides. Reacts with high affinity to FMRFamide and intrinsic FMRFamide-related peptides. By stimulating intracellular calcium signaling through the inositol 1,4,5-trisphosphate receptor, Itpr, in dopaminergic neurons, may be involved in the maintenance of neuronal excitability and in the regulation of flight bout duration. The polypeptide is FMRFamide receptor (Drosophila melanogaster (Fruit fly)).